Here is a 604-residue protein sequence, read N- to C-terminus: Elongation factor 4 (604 aa).

Residues 7–189 (SRLRNFCIIA…AVVDRIPPPA (183 aa)) enclose the tr-type G domain. GTP contacts are provided by residues 19–24 (DHGKST) and 136–139 (NKID).

The protein belongs to the TRAFAC class translation factor GTPase superfamily. Classic translation factor GTPase family. LepA subfamily.

It is found in the cell inner membrane. The enzyme catalyses GTP + H2O = GDP + phosphate + H(+). In terms of biological role, required for accurate and efficient protein synthesis under certain stress conditions. May act as a fidelity factor of the translation reaction, by catalyzing a one-codon backward translocation of tRNAs on improperly translocated ribosomes. Back-translocation proceeds from a post-translocation (POST) complex to a pre-translocation (PRE) complex, thus giving elongation factor G a second chance to translocate the tRNAs correctly. Binds to ribosomes in a GTP-dependent manner. The polypeptide is Elongation factor 4 (Prochlorococcus marinus (strain MIT 9303)).